The chain runs to 479 residues: Anaerobic nitric oxide reductase flavorubredoxin (479 aa).

A zinc metallo-hydrolase region spans residues 30-210 (LRGSSYNSYL…PFSRLVTPKI (181 aa)). Fe cation contacts are provided by histidine 79, glutamate 81, aspartate 83, histidine 147, aspartate 166, and histidine 227. The 140-residue stretch at 254 to 393 (ITIFYDTMSN…LCRQHGRDIA (140 aa)) folds into the Flavodoxin-like domain. Residues 260–264 (TMSNN) and 342–369 (AFGS…EMSL) contribute to the FMN site. The region spanning 423–474 (GPKMQCSVCQWIYDPALGEPLQDVAPGTPWSDVPDNFLCPECSLGKDVFDVL) is the Rubredoxin-like domain. Residues cysteine 428, cysteine 431, cysteine 461, and cysteine 464 each contribute to the Fe cation site.

This sequence in the N-terminal section; belongs to the zinc metallo-hydrolase group 3 family. In terms of assembly, homotetramer. Fe cation is required as a cofactor. FMN serves as cofactor.

The protein resides in the cytoplasm. It functions in the pathway nitrogen metabolism; nitric oxide reduction. In terms of biological role, anaerobic nitric oxide reductase; uses NADH to detoxify nitric oxide (NO), protecting several 4Fe-4S NO-sensitive enzymes. Has at least 2 reductase partners, only one of which (NorW, flavorubredoxin reductase) has been identified. NO probably binds to the di-iron center; electrons enter from the NorW at rubredoxin and are transferred sequentially to the FMN center and the di-iron center. Also able to function as an aerobic oxygen reductase. This chain is Anaerobic nitric oxide reductase flavorubredoxin, found in Salmonella paratyphi B (strain ATCC BAA-1250 / SPB7).